A 926-amino-acid polypeptide reads, in one-letter code: DNA topoisomerase 3-alpha (926 aa).

Residues 10-154 form the Toprim domain; the sequence is TVLNVAEKPS…NLFIRRAHFS (145 aa). Residues glutamate 16, aspartate 123, and aspartate 125 each contribute to the Mg(2+) site. The Topo IA-type catalytic domain occupies 172 to 604; that stretch reads NQLFAEAVDA…CLQQMKACFL (433 aa). Positions 219 to 224 are interaction with DNA; sequence SYGPCQ. Tyrosine 342 (O-(5'-phospho-DNA)-tyrosine intermediate) is an active-site residue. The segment at 642 to 670 adopts a C4-type zinc-finger fold; sequence CNLCNESDMALRKNRDGNFMVGCMNYPQC. Disordered stretches follow at residues 740–760 and 775–806; these read SRSQARRTPGTAPSNNIQGSN and HASTNCPSRVPASRNSRPTATNPRNDESTVSC. The segment covering 750–760 has biased composition (polar residues); sequence TAPSNNIQGSN. Residues 767 to 782 form a CCHC-type 1 zinc finger; it reads CIHCQQRGHASTNCPS. Zn(2+) contacts are provided by cysteine 806, cysteine 809, cysteine 831, and cysteine 836. The segment at 806-845 adopts a GRF-type zinc-finger fold; sequence CNTCGSQCVLRTANTEANRGRQFFSCPTQGCSFFAWEDSI. A disordered region spans residues 849-890; that stretch reads SGNATTGSNSGGSGRRGSRGRGRGGRGGQSSGGRRGSGTSFV. Over residues 873–884 the composition is skewed to gly residues; it reads GRGGQSSGGRRG. Residues 901 to 917 form a CCHC-type 2 zinc finger; that stretch reads RCFSCGDPSHFANACPN.

Belongs to the type IA topoisomerase family. Component of the RMI complex, containing at least TOP3A and RMI1. The RMI complex interacts with RECQL4A. Requires Mg(2+) as cofactor.

The catalysed reaction is ATP-independent breakage of single-stranded DNA, followed by passage and rejoining.. Releases the supercoiling and torsional tension of DNA introduced during the DNA replication and transcription by transiently cleaving and rejoining one strand of the DNA duplex. Introduces a single-strand break via transesterification at a target site in duplex DNA. The scissile phosphodiester is attacked by the catalytic tyrosine of the enzyme, resulting in the formation of a DNA-(5'-phosphotyrosyl)-enzyme intermediate and the expulsion of a 3'-OH DNA strand. The free DNA strand then undergoes passage around the unbroken strand thus removing DNA supercoils. Finally, in the religation step, the DNA 3'-OH attacks the covalent intermediate to expel the active-site tyrosine and restore the DNA phosphodiester backbone. Essential component of the RMI complex, a complex that plays an important role in the resolution step of homologous recombination, in a process called Holliday Junction dissolution, to limit DNA crossover formation in cells. Together with RMI1, is essential for the resolution of meiotic recombination intermediates, a step that prevents entanglement of the parental chromosomes. May have DNA decatenation activity. This chain is DNA topoisomerase 3-alpha (TOP3A), found in Arabidopsis thaliana (Mouse-ear cress).